A 431-amino-acid polypeptide reads, in one-letter code: Phosphate regulon sensor protein PhoR (431 aa).

Residues 1–9 are Cytoplasmic-facing; it reads MLERLSWKR. Residues 10-28 form a helical membrane-spanning segment; it reads LVLELLLCCLPAFILGAFF. Residues 29–32 are Periplasmic-facing; that stretch reads GYLP. Residues 33–51 form a helical membrane-spanning segment; that stretch reads WFLLASVTGLLIWHFWNLL. Residues 52–431 are Cytoplasmic-facing; the sequence is RLSWWLWVDR…PERLIAKNSD (380 aa). Positions 96-172 constitute a PAS domain; the sequence is LIKRFRSGAE…RPLNLVLNTG (77 aa). In terms of domain architecture, Histidine kinase spans 210 to 425; sequence NVSHELRTPL…RFSFVIPERL (216 aa). Histidine 213 carries the phosphohistidine; by autocatalysis modification.

The protein resides in the cell inner membrane. The enzyme catalyses ATP + protein L-histidine = ADP + protein N-phospho-L-histidine.. In terms of biological role, member of the two-component regulatory system PhoR/PhoB involved in the phosphate regulon genes expression. PhoR may function as a membrane-associated protein kinase that phosphorylates PhoB in response to environmental signals. In Escherichia coli (strain K12), this protein is Phosphate regulon sensor protein PhoR (phoR).